Consider the following 722-residue polypeptide: Glycine--tRNA ligase beta subunit (722 aa).

Belongs to the class-II aminoacyl-tRNA synthetase family. In terms of assembly, tetramer of two alpha and two beta subunits.

It is found in the cytoplasm. The enzyme catalyses tRNA(Gly) + glycine + ATP = glycyl-tRNA(Gly) + AMP + diphosphate. The polypeptide is Glycine--tRNA ligase beta subunit (Haemophilus influenzae (strain 86-028NP)).